A 348-amino-acid chain; its full sequence is uncharacterized protein (348 aa).

A signal peptide spans 1-26 (MKKRIILLLAVIIAAAAAGVAFYVAK).

This is an uncharacterized protein from Bacillus subtilis (strain 168).